A 152-amino-acid chain; its full sequence is SMN complex subunit smn1 (152 aa).

The tract at residues 26 to 51 (KKYHSIEAKGGVSDPDSRLDGEKLIS) is interacts with yip11/gem2. The disordered stretch occupies residues 88-110 (DNKGLSDEKPETRAAETHQEFME). Over residues 91 to 108 (GLSDEKPETRAAETHQEF) the composition is skewed to basic and acidic residues. Residues 130–152 (SWYYAGYYTGLAEGLAKSEQRKD) form a may interact with gem8 region.

Belongs to the SMN family. As to quaternary structure, homooligomer; may form homodimers and homotetramers. Part of the core SMN complex at least composed of smn1, yip11/gem2, gem6, gem7 and gem8. Part of the SMN-Sm complex. Interacts with yip11/gem2; the interaction is direct. Interacts with gem8; the interaction is direct. Interacts with proteins of the Sm complex, including smn1, smb1, smd1, smd2 and smd3.

It localises to the nucleus. Functionally, the SMN complex catalyzes the assembly of small nuclear ribonucleoproteins (snRNPs), the building blocks of the spliceosome, and thereby plays an important role in the splicing of cellular pre-mRNAs. Most spliceosomal snRNPs contain a common set of Sm proteins smb1, smd1, smd2, smd3, sme1, smf1 and smg1 that assemble in a heptameric protein ring on the Sm site of the small nuclear RNA to form the core snRNP (Sm core). In the cytosol, the Sm proteins smd1, smd2, sme1, smf1 and smg1 (5Sm) are trapped in an inactive 6S pICln-Sm complex by the chaperone saf5 that controls the assembly of the core snRNP. To assemble core snRNPs, the SMN complex accepts the trapped 5Sm proteins from saf5 forming an intermediate. Binding of snRNA inside 5Sm triggers eviction of the SMN complex, thereby allowing binding of smd3 and smb1 to complete assembly of the core snRNP. Within the SMN complex, smn1 acts as a structural backbone and together with yip11/gem2 it gathers the Sm complex subunits. The protein is SMN complex subunit smn1 of Schizosaccharomyces pombe (strain 972 / ATCC 24843) (Fission yeast).